The sequence spans 295 residues: Elongation factor Ts (295 aa).

Positions 79 to 82 (TDFV) are involved in Mg(2+) ion dislocation from EF-Tu.

This sequence belongs to the EF-Ts family.

It localises to the cytoplasm. Associates with the EF-Tu.GDP complex and induces the exchange of GDP to GTP. It remains bound to the aminoacyl-tRNA.EF-Tu.GTP complex up to the GTP hydrolysis stage on the ribosome. The sequence is that of Elongation factor Ts from Mycoplasma mycoides subsp. mycoides SC (strain CCUG 32753 / NCTC 10114 / PG1).